The following is a 558-amino-acid chain: MAETESRPTNFIRQIIDKDLQSGLHKQIHTRFPPEPNGYLHIGHAKSICLNFGIAQDYQGQCNLRFDDTNPDKEDIDYVNAIKNDVIWLGFEWHGEARYSSNYFDQLHAYAVELIEKGLAYVDFSNQEQVREMRGTLTTPGTNSPYRDTSIEENIAQFAKMRNGEYKEGECLLRAKIDMSSPFMCMRDPALYRVKFAHHHQTGDKWCIYPMYDFTHCISDAIEGITHSLCTLEFQDNRRLYDWVLENVTIDVVPRQYEFSRLNLEYTVLSKRKLIQLVDEEFVSGWDDPRMPTIAGLRRRGFTAASIREFCKRIGVTKMDNMVEMSMLEAPLRDELNENAPRAMAVLEPVKIVIENYPQDGVELLAAPNHPNRPELGSREVPFAREIYIEAEDFREEANKKFKRLVLGKEVRLRNAYVIKAQRVEKDEQGNVTTIFCEYDGDTLGKDPADGRKVKGVIHWVSAAHAVAAEIRLYDSLFTVPNPAAEDDFVACINPESLTVKQGWVEPSLAKVDIDEANIQAFQFERTGYFCFDKDSTTSKLVFNRTVGLRDTWAKIGD.

A 'HIGH' region motif is present at residues 34–44 (PEPNGYLHIGH). ATP contacts are provided by residues 35 to 37 (EPN) and 41 to 47 (HIGHAKS). Residues aspartate 67 and tyrosine 212 each contribute to the L-glutamine site. ATP is bound by residues threonine 231, 261 to 262 (RL), and 269 to 271 (LSK). The 'KMSKS' region signature appears at 268 to 272 (VLSKR).

The protein belongs to the class-I aminoacyl-tRNA synthetase family. Monomer.

Its subcellular location is the cytoplasm. The catalysed reaction is tRNA(Gln) + L-glutamine + ATP = L-glutaminyl-tRNA(Gln) + AMP + diphosphate. The chain is Glutamine--tRNA ligase from Pseudoalteromonas atlantica (strain T6c / ATCC BAA-1087).